The chain runs to 333 residues: Glycerol-3-phosphate dehydrogenase [NAD(P)+] (333 aa).

Positions 10, 11, 31, 32, and 105 each coordinate NADPH. Positions 105, 136, and 138 each coordinate sn-glycerol 3-phosphate. Alanine 140 is an NADPH binding site. Positions 191, 244, 254, 255, and 256 each coordinate sn-glycerol 3-phosphate. Lysine 191 serves as the catalytic Proton acceptor. Arginine 255 provides a ligand contact to NADPH. Positions 279 and 281 each coordinate NADPH.

It belongs to the NAD-dependent glycerol-3-phosphate dehydrogenase family.

The protein resides in the cytoplasm. The enzyme catalyses sn-glycerol 3-phosphate + NAD(+) = dihydroxyacetone phosphate + NADH + H(+). It carries out the reaction sn-glycerol 3-phosphate + NADP(+) = dihydroxyacetone phosphate + NADPH + H(+). It participates in membrane lipid metabolism; glycerophospholipid metabolism. Its function is as follows. Catalyzes the reduction of the glycolytic intermediate dihydroxyacetone phosphate (DHAP) to sn-glycerol 3-phosphate (G3P), the key precursor for phospholipid synthesis. The chain is Glycerol-3-phosphate dehydrogenase [NAD(P)+] from Chlorobium phaeobacteroides (strain DSM 266 / SMG 266 / 2430).